A 149-amino-acid polypeptide reads, in one-letter code: 4-hydroxyphenylacetate 3-monooxygenase, reductase component (149 aa).

Position 27–34 (27–34) interacts with FAD; it reads ERGMTATA. An NAD(+)-binding site is contributed by S37. Residues 48 to 50, 54 to 55, and H80 each bind FAD; these read AVS and KL. NAD(+) is bound by residues H116 and 137 to 140; that span reads YFQR.

It belongs to the non-flavoprotein flavin reductase family. HpaC subfamily. Homodimer. 4-HPA 3-monooxygenase consists of a reductase component HpaC and an oxygenase component HpaB.

The catalysed reaction is a reduced flavin + NAD(+) = an oxidized flavin + NADH + 2 H(+). It participates in aromatic compound metabolism; 4-hydroxyphenylacetate degradation; pyruvate and succinate semialdehyde from 4-hydroxyphenylacetate: step 1/7. Functionally, catalyzes the reduction of free flavins (FMN, FAD and riboflavin) by NADH. Subsequently, the reduced flavins diffuse to the large HpaB component. It utilizes NADH, but not NADPH as an electron donor, and both FAD and FMN as electron acceptors. The protein is 4-hydroxyphenylacetate 3-monooxygenase, reductase component of Thermus thermophilus (strain ATCC 27634 / DSM 579 / HB8).